The chain runs to 771 residues: Polymeric immunoglobulin receptor (771 aa).

An N-terminal signal peptide occupies residues 1–18; that stretch reads MRLYLFTLLVTVFSGVST. Residues 19 to 645 lie on the Extracellular side of the membrane; the sequence is KSPIFGPQEV…DGQSRSSSSK (627 aa). The Ig-like V-type 1; required for binding to polymeric IgA and IgM domain occupies 21 to 120; that stretch reads PIFGPQEVSS…GLGTSNRGLS (100 aa). A disulfide bridge connects residues cysteine 40 and cysteine 110. Residues asparagine 90, asparagine 147, asparagine 170, and asparagine 206 are each glycosylated (N-linked (GlcNAc...) asparagine). 4 Ig-like V-type domains span residues 135–237, 245–351, 352–457, and 463–563; these read SDTH…DLQV, LYKD…ESTI, PNRR…LQVA, and PNLE…IYIA. 3 disulfide bridges follow: cysteine 152/cysteine 220, cysteine 257/cysteine 324, and cysteine 370/cysteine 440. Asparagine 420 and asparagine 471 each carry an N-linked (GlcNAc...) asparagine glycan. Residues cysteine 484 and cysteine 546 are joined by a disulfide bond. Positions 622-641 are disordered; the sequence is QAQENRASGDAGSADGQSRS. Positions 627–641 are enriched in low complexity; that stretch reads RASGDAGSADGQSRS. The chain crosses the membrane as a helical span at residues 646–668; that stretch reads VLFSTLVPLGLVLAVGAIAVWVA. Residues 669-771 are Cytoplasmic-facing; that stretch reads RVRHRKNVDR…AQVHDGPQEA (103 aa). Serine 680, serine 689, serine 696, and serine 742 each carry phosphoserine.

In terms of assembly, interacts (mainly via CDR1-like domain) with dimeric IgA. Interacts (mainly via CDR2-like domain) with pentameric IgM. As to quaternary structure, either free or part of the secretory IgA (sIgA) complex that consists of two, four or five IgA monomers, and two additional non-Ig polypeptides, namely the JCHAIN and the secretory component (the proteolytic product of PIGR). Free secretory component interacts with bacterial antigens toxA of C.difficile and eae of E.coli. In terms of processing, N-glycosylated. N-glycosylation is required for anchoring IgA molecules to mucus, but is not necessary for Ig binding.

The protein localises to the cell membrane. It localises to the secreted. Mediates selective transcytosis of polymeric IgA and IgM across mucosal epithelial cells. Binds polymeric IgA and IgM at the basolateral surface of epithelial cells. The complex is then transported across the cell to be secreted at the apical surface. During this process, a cleavage occurs that separates the extracellular (known as the secretory component) from the transmembrane segment. Functionally, through its N-linked glycans ensures anchoring of secretory IgA (sIgA) molecules to mucus lining the epithelial surface to neutralize extracellular pathogens. On its own (free form) may act as a non-specific microbial scavenger to prevent pathogen interaction with epithelial cells. The polypeptide is Polymeric immunoglobulin receptor (Pigr) (Mus musculus (Mouse)).